The following is a 189-amino-acid chain: Nucleoside triphosphate pyrophosphatase (189 aa).

The active-site Proton acceptor is aspartate 70.

The protein belongs to the Maf family. It depends on a divalent metal cation as a cofactor.

Its subcellular location is the cytoplasm. It catalyses the reaction a ribonucleoside 5'-triphosphate + H2O = a ribonucleoside 5'-phosphate + diphosphate + H(+). The catalysed reaction is a 2'-deoxyribonucleoside 5'-triphosphate + H2O = a 2'-deoxyribonucleoside 5'-phosphate + diphosphate + H(+). Functionally, nucleoside triphosphate pyrophosphatase. May have a dual role in cell division arrest and in preventing the incorporation of modified nucleotides into cellular nucleic acids. The protein is Nucleoside triphosphate pyrophosphatase of Xylella fastidiosa (strain 9a5c).